Reading from the N-terminus, the 309-residue chain is MVPVLHSLSTIILIAEFVWGNLSNGLIVLKNCIDWINKKELSTVDQILIVLAISRISLIWETLIIWVKDQLISSITIEELKIIVFSFILSSHFSLWLATALSIFYLFRIPNCYWQIFLYLKWRIKQLIVHMLLGSLVFLVANMIQITITLEERFYQYGGNTSVNSMETEFSILIELMLFNMTMFSIIPFSLALISFLLLIFSLWKHLQKMPLNSRGDRDPSATAHRNALRILVSFLLLYTIYFLSLLISWVAQKNQSELVHIICMITSLVYPSFHSYILILGNYKLKQTSLWVMRQLGCRMKRQNTPTT.

Over Met-1–Ser-7 the chain is Extracellular. A helical transmembrane segment spans residues Leu-8–Val-28. Over Leu-29 to Gln-46 the chain is Cytoplasmic. Residues Ile-47 to Val-67 form a helical membrane-spanning segment. Topologically, residues Lys-68–Ser-86 are extracellular. A helical membrane pass occupies residues Phe-87–Phe-107. The Cytoplasmic segment spans residues Arg-108–Leu-127. The chain crosses the membrane as a helical span at residues Ile-128 to Ile-148. Topologically, residues Thr-149–Met-183 are extracellular. 2 N-linked (GlcNAc...) asparagine glycosylation sites follow: Asn-160 and Asn-180. Residues Phe-184 to Trp-204 form a helical membrane-spanning segment. Residues Lys-205–Arg-230 lie on the Cytoplasmic side of the membrane. The chain crosses the membrane as a helical span at residues Ile-231–Val-251. Over Ala-252–His-261 the chain is Extracellular. Asn-255 carries N-linked (GlcNAc...) asparagine glycosylation. Residues Ile-262 to Gly-282 form a helical membrane-spanning segment. Over Asn-283 to Thr-309 the chain is Cytoplasmic.

It belongs to the G-protein coupled receptor T2R family.

The protein resides in the membrane. Functionally, putative taste receptor which may play a role in the perception of bitterness. The sequence is that of Taste receptor type 2 member 124 from Mus musculus (Mouse).